The following is a 166-amino-acid chain: Protein-export protein SecB (166 aa).

This sequence belongs to the SecB family. Homotetramer, a dimer of dimers. One homotetramer interacts with 1 SecA dimer.

The protein localises to the cytoplasm. Its function is as follows. One of the proteins required for the normal export of preproteins out of the cell cytoplasm. It is a molecular chaperone that binds to a subset of precursor proteins, maintaining them in a translocation-competent state. It also specifically binds to its receptor SecA. This is Protein-export protein SecB from Actinobacillus succinogenes (strain ATCC 55618 / DSM 22257 / CCUG 43843 / 130Z).